The primary structure comprises 52 residues: UPF0181 protein CGSHiGG_01050 (52 aa).

It belongs to the UPF0181 family.

This Haemophilus influenzae (strain PittGG) protein is UPF0181 protein CGSHiGG_01050.